The following is a 251-amino-acid chain: Small ribosomal subunit protein uS2 (251 aa).

This sequence belongs to the universal ribosomal protein uS2 family.

The chain is Small ribosomal subunit protein uS2 from Nitrosomonas europaea (strain ATCC 19718 / CIP 103999 / KCTC 2705 / NBRC 14298).